A 343-amino-acid chain; its full sequence is Holliday junction branch migration complex subunit RuvB (343 aa).

Residues 1–182 (MTDPIPLHTP…FGIPVRLNFY (182 aa)) are large ATPase domain (RuvB-L). Residues Leu21, Arg22, Gly63, Lys66, Thr67, Thr68, Arg172, Tyr182, and Arg219 each contribute to the ATP site. Position 67 (Thr67) interacts with Mg(2+). The tract at residues 183–253 (TEEELEKVVT…IADAALTRLE (71 aa)) is small ATPAse domain (RuvB-S). Residues 256-343 (GLGLDAMDRR…SQTGLFDGKS (88 aa)) are head domain (RuvB-H). DNA contacts are provided by Arg292, Arg311, and Arg316.

Belongs to the RuvB family. Homohexamer. Forms an RuvA(8)-RuvB(12)-Holliday junction (HJ) complex. HJ DNA is sandwiched between 2 RuvA tetramers; dsDNA enters through RuvA and exits via RuvB. An RuvB hexamer assembles on each DNA strand where it exits the tetramer. Each RuvB hexamer is contacted by two RuvA subunits (via domain III) on 2 adjacent RuvB subunits; this complex drives branch migration. In the full resolvosome a probable DNA-RuvA(4)-RuvB(12)-RuvC(2) complex forms which resolves the HJ.

It localises to the cytoplasm. It carries out the reaction ATP + H2O = ADP + phosphate + H(+). Its function is as follows. The RuvA-RuvB-RuvC complex processes Holliday junction (HJ) DNA during genetic recombination and DNA repair, while the RuvA-RuvB complex plays an important role in the rescue of blocked DNA replication forks via replication fork reversal (RFR). RuvA specifically binds to HJ cruciform DNA, conferring on it an open structure. The RuvB hexamer acts as an ATP-dependent pump, pulling dsDNA into and through the RuvAB complex. RuvB forms 2 homohexamers on either side of HJ DNA bound by 1 or 2 RuvA tetramers; 4 subunits per hexamer contact DNA at a time. Coordinated motions by a converter formed by DNA-disengaged RuvB subunits stimulates ATP hydrolysis and nucleotide exchange. Immobilization of the converter enables RuvB to convert the ATP-contained energy into a lever motion, pulling 2 nucleotides of DNA out of the RuvA tetramer per ATP hydrolyzed, thus driving DNA branch migration. The RuvB motors rotate together with the DNA substrate, which together with the progressing nucleotide cycle form the mechanistic basis for DNA recombination by continuous HJ branch migration. Branch migration allows RuvC to scan DNA until it finds its consensus sequence, where it cleaves and resolves cruciform DNA. The chain is Holliday junction branch migration complex subunit RuvB from Erythrobacter litoralis (strain HTCC2594).